Consider the following 163-residue polypeptide: Small ribosomal subunit protein bS18c (163 aa).

Disordered stretches follow at residues 1–52 and 144–163; these read MYIS…IGPG and NLRNSNQNLRNNNRNLSSDC. Over residues 7–48 the composition is skewed to basic residues; it reads PFRKSKQPFRKSKQPFHKSKQPFRKFKQPFRKSKQPFRRRSR.

This sequence belongs to the bacterial ribosomal protein bS18 family. Part of the 30S ribosomal subunit.

The protein localises to the plastid. It is found in the chloroplast. The protein is Small ribosomal subunit protein bS18c of Saccharum hybrid (Sugarcane).